Reading from the N-terminus, the 449-residue chain is Secretin receptor (449 aa).

Positions 1 to 25 (MLSTMRPRLSLLLLRLLLLTKAAHT) are cleaved as a signal peptide. Over 26-141 (VGVPPRLCDV…NERRHAYLLK (116 aa)) the chain is Extracellular. Intrachain disulfides connect Cys-46–Cys-75, Cys-66–Cys-107, and Cys-89–Cys-123. 4 N-linked (GlcNAc...) asparagine glycosylation sites follow: Asn-72, Asn-100, Asn-106, and Asn-128. Residues 142–167 (LKVMYTVGYSSSLAMLLVALSILCSF) traverse the membrane as a helical segment. The Cytoplasmic portion of the chain corresponds to 168 to 174 (RRLHCTR). The helical transmembrane segment at 175–195 (NYIHMHLFVSFILRALSNFIK) threads the bilayer. The Extracellular portion of the chain corresponds to 196 to 216 (DAVLFSSDDVTYCDAHKVGCK). A disulfide bridge connects residues Cys-215 and Cys-285. A helical membrane pass occupies residues 217–239 (LVMIFFQYCIMANYAWLLVEGLY). Residues 240–254 (LHTLLAISFFSERKY) are Cytoplasmic-facing. A helical transmembrane segment spans residues 255 to 276 (LQAFVLLGWGSPAIFVALWAIT). Residues 277–291 (RHFLENTGCWDINAN) lie on the Extracellular side of the membrane. The N-linked (GlcNAc...) asparagine glycan is linked to Asn-291. The chain crosses the membrane as a helical span at residues 292 to 315 (ASVWWVIRGPVILSILINFIFFIN). Residues 316–340 (ILRILMRKLRTQETRGSETNHYKRL) are Cytoplasmic-facing. The helical transmembrane segment at 341–356 (AKSTLLLIPLFGIHYI) threads the bilayer. Over 357–367 (VFAFSPEDAME) the chain is Extracellular. A helical transmembrane segment spans residues 368–391 (VQLFFELALGSFQGLVVAVLYCFL). At 392 to 449 (NGEVQLEVQKKWRQWHLQEFPLRPVAFNNSFSNATNGPTHSTKASTEQSRSIPRASII) the chain is on the cytoplasmic side. Residues 425-442 (ATNGPTHSTKASTEQSRS) show a composition bias toward polar residues. The tract at residues 425-449 (ATNGPTHSTKASTEQSRSIPRASII) is disordered.

Belongs to the G-protein coupled receptor 2 family. Post-translationally, phosphorylated on Ser and Thr residues at the cytoplasmic C-terminus by G protein-coupled receptor kinases (GRKs). N-glycosylated. In the brain, expressed in the central amygdala, hippocampus, area postrema, nucleus of the tractus solitary and cerebellum.

It is found in the cell membrane. The protein localises to the basolateral cell membrane. In terms of biological role, g protein-coupled receptor activated by secretin (SCT), which is involved in different processes such as regulation of the pH of the duodenal content, food intake and water homeostasis. Ligand binding causes a conformation change that triggers signaling via guanine nucleotide-binding proteins (G proteins) and activates cAMP-dependent pathway. Upon binding to secretin, regulates the pH of the duodenum by (1) inhibiting the secretion of gastric acid from the parietal cells of the stomach and (2) stimulating the production of bicarbonate (NaHCO(3)) from the ductal cells of the pancreas. In addition to regulating the pH of the duodenal content, plays a central role in diet induced thermogenesis: acts as a non-sympathetic brown fat (BAT) activator mediating prandial thermogenesis, which consequentially induces satiation. Mechanistically, secretin released by the gut after a meal binds to secretin receptor (SCTR) in brown adipocytes, activating brown fat thermogenesis by stimulating lipolysis, which is sensed in the brain and promotes satiation. Also able to stimulate lipolysis in white adipocytes. Also plays an important role in cellular osmoregulation by regulating renal water reabsorption. Also plays a role in the central nervous system: required for synaptic plasticity. This chain is Secretin receptor, found in Rattus norvegicus (Rat).